A 698-amino-acid chain; its full sequence is Elongation factor G 1 (698 aa).

One can recognise a tr-type G domain in the interval 8–290 (ERYRNIGICA…AVIEFLPSPT (283 aa)). Residues 17 to 24 (AHVDAGKT), 88 to 92 (DTPGH), and 142 to 145 (NKMD) each bind GTP.

This sequence belongs to the TRAFAC class translation factor GTPase superfamily. Classic translation factor GTPase family. EF-G/EF-2 subfamily.

Its subcellular location is the cytoplasm. Catalyzes the GTP-dependent ribosomal translocation step during translation elongation. During this step, the ribosome changes from the pre-translocational (PRE) to the post-translocational (POST) state as the newly formed A-site-bound peptidyl-tRNA and P-site-bound deacylated tRNA move to the P and E sites, respectively. Catalyzes the coordinated movement of the two tRNA molecules, the mRNA and conformational changes in the ribosome. The protein is Elongation factor G 1 of Vibrio cholerae serotype O1 (strain ATCC 39315 / El Tor Inaba N16961).